The following is a 484-amino-acid chain: 6-phosphogluconate dehydrogenase, decarboxylating (484 aa).

NADP(+) contacts are provided by residues 11–16 (GLAVMG), 34–36 (NRT), 76–78 (VRA), and Asn-104. Residues Asn-104 and 130 to 132 (SGG) each bind substrate. Lys-185 serves as the catalytic Proton acceptor. 188-189 (HN) serves as a coordination point for substrate. Glu-192 (proton donor) is an active-site residue. Positions 193, 262, 289, 447, and 453 each coordinate substrate.

The protein belongs to the 6-phosphogluconate dehydrogenase family. Homodimer.

The catalysed reaction is 6-phospho-D-gluconate + NADP(+) = D-ribulose 5-phosphate + CO2 + NADPH. It functions in the pathway carbohydrate degradation; pentose phosphate pathway; D-ribulose 5-phosphate from D-glucose 6-phosphate (oxidative stage): step 3/3. Functionally, catalyzes the oxidative decarboxylation of 6-phosphogluconate to ribulose 5-phosphate and CO(2), with concomitant reduction of NADP to NADPH. The protein is 6-phosphogluconate dehydrogenase, decarboxylating (gnd) of Haemophilus ducreyi (strain 35000HP / ATCC 700724).